Here is a 213-residue protein sequence, read N- to C-terminus: NDR1/HIN1-like protein 26 (213 aa).

At methionine 1–leucine 27 the chain is on the cytoplasmic side. The helical transmembrane segment at phenylalanine 28–isoleucine 48 threads the bilayer. Over leucine 49 to isoleucine 213 the chain is Lumenal. N-linked (GlcNAc...) asparagine glycans are attached at residues asparagine 67, asparagine 77, and asparagine 195.

Expressed in the vasculature of roots, rosette leaves, stems, cauline leaves and flowers. Specifically expressed in phloem.

Its subcellular location is the cell junction. The protein localises to the plasmodesma. It localises to the endoplasmic reticulum membrane. Involved in the regulation of sugar, amino acid and some primary metabolite export from companion cells (CCs) to sieve elements (SEs) in phloem. Required for apoplastic phloem sugar loading in source leaves in order to transport it to sink tissues. Required for correct sugar partitioning between source leaves and sink organs. This is NDR1/HIN1-like protein 26 from Arabidopsis thaliana (Mouse-ear cress).